Here is a 355-residue protein sequence, read N- to C-terminus: Protein RecA (355 aa).

Position 72 to 79 (72 to 79 (GPESSGKT)) interacts with ATP.

This sequence belongs to the RecA family.

It is found in the cytoplasm. In terms of biological role, can catalyze the hydrolysis of ATP in the presence of single-stranded DNA, the ATP-dependent uptake of single-stranded DNA by duplex DNA, and the ATP-dependent hybridization of homologous single-stranded DNAs. It interacts with LexA causing its activation and leading to its autocatalytic cleavage. This chain is Protein RecA, found in Wolbachia sp. subsp. Drosophila simulans (strain wRi).